Here is a 134-residue protein sequence, read N- to C-terminus: Interleukin-5 (134 aa).

The N-terminal stretch at 1–21 (MRMHLHLTLVALGAAYVCANA) is a signal peptide. N76 and N90 each carry an N-linked (GlcNAc...) asparagine glycan.

It belongs to the IL-5 family. In terms of assembly, homodimer; disulfide-linked. Interacts with IL5RA. Interacts with CSF2RB.

It is found in the secreted. Functionally, homodimeric cytokine expressed predominantly by T-lymphocytes and NK cells that plays an important role in the survival, differentiation, and chemotaxis of eosinophils. Also acts on activated and resting B-cells to induce immunoglobulin production, growth, and differentiation. Mechanistically, exerts its biological effects through a receptor composed of IL5RA subunit and the cytokine receptor common subunit beta/CSF2RB. Binding to the receptor leads to activation of various kinases including LYN, SYK and JAK2 and thereby propagates signals through the RAS-MAPK and JAK-STAT5 pathways respectively. In Bos taurus (Bovine), this protein is Interleukin-5 (IL5).